We begin with the raw amino-acid sequence, 466 residues long: Cysteine--tRNA ligase (466 aa).

Zn(2+) is bound at residue Cys-29. The 'HIGH' region motif lies at Pro-31–Asn-41. Positions 209, 234, and 238 each coordinate Zn(2+). The short motif at Lys-266 to Ser-270 is the 'KMSKS' region element. Residue Lys-269 participates in ATP binding. A Phosphoserine modification is found at Ser-270.

Belongs to the class-I aminoacyl-tRNA synthetase family. As to quaternary structure, monomer. It depends on Zn(2+) as a cofactor.

Its subcellular location is the cytoplasm. The enzyme catalyses tRNA(Cys) + L-cysteine + ATP = L-cysteinyl-tRNA(Cys) + AMP + diphosphate. The protein is Cysteine--tRNA ligase of Bacillus velezensis (strain DSM 23117 / BGSC 10A6 / LMG 26770 / FZB42) (Bacillus amyloliquefaciens subsp. plantarum).